The primary structure comprises 270 residues: Pre-mRNA-splicing factor CWC23 (270 aa).

A J domain is found at D12–Y84.

This sequence belongs to the DnaJ family. In terms of assembly, associated with the spliceosome.

It localises to the cytoplasm. The protein resides in the nucleus. Involved in pre-mRNA splicing. May be involved in endoplasmic reticulum-associated protein degradation (ERAD) and required for growth at low and high temperatures. The sequence is that of Pre-mRNA-splicing factor CWC23 (CWC23) from Kluyveromyces lactis (strain ATCC 8585 / CBS 2359 / DSM 70799 / NBRC 1267 / NRRL Y-1140 / WM37) (Yeast).